A 382-amino-acid chain; its full sequence is Neuropeptide Y receptor type 1 (382 aa).

The Extracellular portion of the chain corresponds to 1–33 (MNSTLFSRVENYSVHYNVSENSPFLAFENDDCH). 3 N-linked (GlcNAc...) asparagine glycosylation sites follow: Asn-2, Asn-11, and Asn-17. A helical membrane pass occupies residues 34 to 54 (LPLAVIFTLALAYGAVIILGV). Over 55 to 75 (SGNLALIIIILKQKEMRNVTN) the chain is Cytoplasmic. Residues 76–96 (ILIVNLSFSDLLVAVMCLPFT) traverse the membrane as a helical segment. Topologically, residues 97–115 (FVYTLMDHWVFGETMCKLN) are extracellular. Cys-112 and Cys-197 are joined by a disulfide. The chain crosses the membrane as a helical span at residues 116–136 (PFVQCVSITVSIFSLVLIAVE). Topologically, residues 137 to 153 (RHQLIINPRGWRPNNRH) are cytoplasmic. Residues 154–174 (AYIGITVIWVLAVASSLPFVI) traverse the membrane as a helical segment. The Extracellular segment spans residues 175–210 (YQILTDEPFQNVSLAAFKDKYVCFDKFPSDSHRLSY). Residues 211–231 (TTLLLVLQYFGPLCFIFICYF) traverse the membrane as a helical segment. The Cytoplasmic portion of the chain corresponds to 232 to 259 (KIYIRLKRRNNMMDKIRDSKYRSSETKR). A helical transmembrane segment spans residues 260–280 (INVMLLSIVVAFAVCWLPLTI). The Extracellular segment spans residues 281–298 (FNTVFDWNHQIIATCNHN). A helical membrane pass occupies residues 299 to 319 (LLFLLCHLTAMISTCVNPIFY). The Cytoplasmic segment spans residues 320–382 (GFLNKNFQRD…KISMNDNEKI (63 aa)). Cys-337 carries the S-palmitoyl cysteine lipid modification. Ser-367 and Ser-375 each carry phosphoserine.

This sequence belongs to the G-protein coupled receptor 1 family. Brain.

The protein resides in the cell membrane. Functionally, receptor for neuropeptide Y and peptide YY. The sequence is that of Neuropeptide Y receptor type 1 (Npy1r) from Rattus norvegicus (Rat).